Here is a 275-residue protein sequence, read N- to C-terminus: 2,3,4,5-tetrahydropyridine-2,6-dicarboxylate N-succinyltransferase (275 aa).

Substrate contacts are provided by R104 and D141.

It belongs to the transferase hexapeptide repeat family. In terms of assembly, homotrimer.

Its subcellular location is the cytoplasm. It catalyses the reaction (S)-2,3,4,5-tetrahydrodipicolinate + succinyl-CoA + H2O = (S)-2-succinylamino-6-oxoheptanedioate + CoA. Its pathway is amino-acid biosynthesis; L-lysine biosynthesis via DAP pathway; LL-2,6-diaminopimelate from (S)-tetrahydrodipicolinate (succinylase route): step 1/3. This chain is 2,3,4,5-tetrahydropyridine-2,6-dicarboxylate N-succinyltransferase, found in Tolumonas auensis (strain DSM 9187 / NBRC 110442 / TA 4).